Consider the following 271-residue polypeptide: High mobility group protein homolog TDP-1 (271 aa).

The DEK-C domain occupies 8-63 (GPLPTDIEETVITIMREEGVRYITAKILRMRLESKYQMEFGPHKAAIDDIVARAMQ). The interval 75 to 118 (LKEKDASKSSGGKGSKRARSAGAEAPSKTKKEMTEKPKKPADYP) is disordered. Residues 101–116 (SKTKKEMTEKPKKPAD) show a composition bias toward basic and acidic residues. 2 DNA-binding regions (HMG box) span residues 118-186 (PKPA…DEYK) and 206-270 (PKRA…AALP).

The protein resides in the nucleus. In terms of biological role, unknown. May play a role in transcription and/or DNA replication. It is not known whether this protein is DNA sequence binding-specific or not. The sequence is that of High mobility group protein homolog TDP-1 from Trypanosoma brucei rhodesiense.